A 282-amino-acid polypeptide reads, in one-letter code: UPF0761 membrane protein HAPS_1376 (282 aa).

The next 6 membrane-spanning stretches (helical) occupy residues 32-52 (LLSLVPLIMVVFSVFTLLPIF), 89-109 (MGIISIIGLVVVAVMLISSID), 124-144 (VILSFVVYLAVLIFAPIFAGA), 170-190 (LLKFIPFVLTWLLFALVYLIV), 202-222 (VGALFAGVFFTLGKQIFIWYI), and 234-254 (ALATIPIMIVWIHLSWQVVLL).

The protein belongs to the UPF0761 family.

It localises to the cell inner membrane. The chain is UPF0761 membrane protein HAPS_1376 from Glaesserella parasuis serovar 5 (strain SH0165) (Haemophilus parasuis).